A 141-amino-acid polypeptide reads, in one-letter code: MLEIDNQTPLESDFLLLEKIADVLASTQIIELVLVSDETMREINRDLRDCDYATDVLSFPLEAIPHTPLGSVVINAPLAQENALKLGHSLEDEIALLFIHGVLHLLGYDHEKDKGEQRQKEGELIKAFDLPLSLIERTQEC.

Residues H100, H104, and H110 each contribute to the Zn(2+) site.

The protein belongs to the endoribonuclease YbeY family. Requires Zn(2+) as cofactor.

It is found in the cytoplasm. In terms of biological role, single strand-specific metallo-endoribonuclease involved in late-stage 70S ribosome quality control and in maturation of the 3' terminus of the 16S rRNA. The chain is Endoribonuclease YbeY from Helicobacter pylori (strain J99 / ATCC 700824) (Campylobacter pylori J99).